We begin with the raw amino-acid sequence, 467 residues long: MATEYALRMGDGKRIYLTKEKILSEIEAGSSNAADLGDIPDLSTDEMKKLAEILMMPGKAVSVEQGMEVPVTHDIGTIRLDGDQGNSGVGIPSSRLVGCMTHERAFGADTMELGHIDYSFKPVKPVVSNECQAMEVCQQNMIIPLFYGAMPNMGLYYTPDGPFENPGDLMKMFKIDKARESMEHAADHLTRDTVWVMQKLFASGADGVNFDTTAAAGDADMYGTLRAVEVLRAQFPEMYIEVGMAGEMVLGMHGELEYDEVRLAGLWPHEQAPLIAKAGANVFGPVVNTNTSKTSAWNLARAVTFIKEAVKASPIPCHVNMGMGVGGIPMLETPPVDAVTRASKAMVEVAGVDGIOIGVGDPLGMPISHIMASGMTGIRAAGDLVARMEFSKNMRIGEAKEYVAKKLNVDTMDLADEHVMRELREELDIGVITSVPGAAKGIAAKMNIEKLLGIKINSCETFRAQLA.

Residue Pyl356 is a non-standard amino acid, pyrrolysine.

Belongs to the dimethylamine methyltransferase family.

The catalysed reaction is Co(I)-[dimethylamine-specific corrinoid protein] + dimethylamine + H(+) = methyl-Co(III)-[dimethylamine-specific corrinoid protein] + methylamine. The protein operates within one-carbon metabolism; methanogenesis from dimethylamine. Catalyzes the transfer of a methyl group from dimethylamine to the corrinoid cofactor of MtbC. The chain is Dimethylamine methyltransferase MtbB3 (mtbB3) from Methanosarcina acetivorans (strain ATCC 35395 / DSM 2834 / JCM 12185 / C2A).